An 864-amino-acid chain; its full sequence is MYMARCGPKNNVLCFPFQLSFLFSKRLINKRFKYTLQTEDEKNMMGSLSKNKIITPEDVEFKLAQLREFSNTLKERIHNTKSVNSDGHQSNSIAPISEDSRNVNVTKISSVPNEEKSKNLSDLIHSSFLEKMDHLVPKVIRERVADDDILAKNLFDRSHSNWAPVIDRLYVSEKRFMDIDSREFSVWLNGTVKYLPFHSILHLDEMLLEQINGDVVKFNTHMYECIFNNLGNLKPTNFNQDGTNDKVILKMKELLERYDKALKITEERINKKEGFPSKVPKMTQAILNNCLKYSTKCSSFHDMDYFITKFRDDYGITPNKQNLTTVIQFYSRKEMTKQAWNTFDTMKFLSTKHFPDICTYNTMLRICEKERNFPKALDLFQEIQDHNIKPTTNTYIMMARVLASSSSNAVVSEGKSDSLRLLGWKYLHELEDKNLYRHKKDDLNLFLAMMALAAFDGDIELSRALYYLFIAKKYKTLCANWKGNILVDQDTIWKSTLMPEMLNYLMLAYARFDPRNLPVLSGYEKGIELRRKFLREFDSSMRLDDTDKLVKFKLPFLPISDLNSEAQVLAESNAIWSFNLENGGTRNTLTSSNEAALEDIKKYRQLLDSFAQEAEDFNEFKFKVMYEVTKMQRESINVNVFNKISLHTYLSIPINLKQQKEFLRRLTFFTFQQHEFEAVIKRLYEGYRNIPSSHTRDQNSISTEAISVSKPETTEDLNLIMHDIWYITCLRHKIMMDTTLYELVMKAAIEFQNEDLAKKVWNDRGKFRTTVPFLKMDQRIRIAKDQKFAHLMVEFFTKQGKYSDAIAIILSSKNRFNWTYSMVRNLHKALEEIEDRNSVEILLDVVNKKSHAKALKWEEQELNM.

The transit peptide at 1 to 76 directs the protein to the mitochondrion; the sequence is MYMARCGPKN…REFSNTLKER (76 aa). 2 PPR repeats span residues 319-353 and 356-390; these read NKQN…STKH and DICT…NIKP.

Belongs to the CCM1 family. Binds to mitochondrial small subunit 15S rRNA.

It localises to the mitochondrion. Its function is as follows. Regulates mitochondrial small subunit maturation by controlling 15S rRNA 5'-end processing. Localizes to the 5' precursor of the 15S rRNA in a position that is subsequently occupied by mS47 in the mature yeast mtSSU. Uses structure and sequence-specific RNA recognition, binding to a single-stranded region of the precursor and specifically recognizing bases -6 to -1. The exchange of Ccm1 for mS47 is coupled to the irreversible removal of precursor rRNA that is accompanied by conformational changes of the mitoribosomal proteins uS5m and mS26. These conformational changes signal completion of 5'-end rRNA processing through protection of the mature 5'-end of the 15S rRNA and stabilization of mS47. The removal of the 5' precursor together with the dissociation of Ccm1 may be catalyzed by the 5'-3' exoribonuclease Pet127. Involved in the specific removal of group I introns in mitochondrial encoded transcripts. This chain is Mitochondrial 15S rRNA processing factor CCM1 (CCM1), found in Saccharomyces cerevisiae (strain RM11-1a) (Baker's yeast).